Reading from the N-terminus, the 417-residue chain is Monooxygenase cfoF (417 aa).

FAD contacts are provided by residues 45–48 (DRDK), Arg126, and Asp327. Basic and acidic residues predominate over residues 389 to 399 (AHTTQLDRDQF). A disordered region spans residues 389–417 (AHTTQLDRDQFTDGSGANDFLVGQQHSDK).

It belongs to the aromatic-ring hydroxylase family. KMO subfamily. It depends on FAD as a cofactor.

Its pathway is secondary metabolite biosynthesis; flavonoid biosynthesis. Monooxygenase; part of the gene cluster that mediates the biosynthesis of chlorflavonin, a fungal flavonoid with acetolactate synthase inhibitory activity. Within the pathway, cfoF is responsible for the hydroxylation of the flavonoid skeleton at position C3. The pathway begins with the PKS-NRPS hybrid synthetase cfoA that uses benzoic acid or p-hydroxybenzoic acid as a starter unit with four rounds of chain elongation using malonyl-CoA to form the chalcone skeleton. Then, a new type of chalcone isomerase, cfoK, catalyzes the conversion of the chalcone into a flavanone by a histidine-mediated oxa-Michael addition mechanism. The desaturation of flavanone to flavone is catalyzed by a new type of flavone synthase, the flavin mononucleotide (FMN)-dependent oxidoreductase cfoJ. Monooxygenases cfoF, cfoG, and P450 cfoH are responsible for the hydroxylation of the flavonoid skeleton at sites C3, C8, and C2', respectively. Like cfoF, the dehydratase cfoI plays also a role in the hydroxylation of position C3. Methyltransferases cfoB, cfoC, and cfoD then catalyze the methylation of C7-OH, C8-OH, and C3-OH, respectively. Finally, the monooxygenase cfoE is responsible for the chlorination of flavonoid at position C3'. This is Monooxygenase cfoF from Aspergillus candidus.